We begin with the raw amino-acid sequence, 238 residues long: tRNA1(Val) (adenine(37)-N6)-methyltransferase (238 aa).

It belongs to the methyltransferase superfamily. tRNA (adenine-N(6)-)-methyltransferase family.

Its subcellular location is the cytoplasm. The enzyme catalyses adenosine(37) in tRNA1(Val) + S-adenosyl-L-methionine = N(6)-methyladenosine(37) in tRNA1(Val) + S-adenosyl-L-homocysteine + H(+). Its function is as follows. Specifically methylates the adenine in position 37 of tRNA(1)(Val) (anticodon cmo5UAC). The sequence is that of tRNA1(Val) (adenine(37)-N6)-methyltransferase from Cytophaga hutchinsonii (strain ATCC 33406 / DSM 1761 / CIP 103989 / NBRC 15051 / NCIMB 9469 / D465).